The sequence spans 544 residues: NADP-dependent malic enzyme (544 aa).

Residues 1-22 (MQNKPSFILRNPSANKGTGFNN) are disordered. Residues 12 to 21 (PSANKGTGFN) are compositionally biased toward polar residues. The active-site Proton donor is Tyr92. Residue Arg145 participates in NAD(+) binding. Lys163 (proton acceptor) is an active-site residue. A divalent metal cation-binding residues include Glu234, Asp235, and Asp258. Residue Asp258 coordinates NAD(+). 287–303 (VFLGAGSAGIGVADCIM) is a binding site for NADP(+). Asn400 serves as a coordination point for NAD(+).

It belongs to the malic enzymes family. Homotetramer. Mg(2+) is required as a cofactor. The cofactor is Mn(2+). In terms of tissue distribution, expressed in the fruiting body.

The protein resides in the cytoplasm. It carries out the reaction (S)-malate + NADP(+) = pyruvate + CO2 + NADPH. It catalyses the reaction oxaloacetate + H(+) = pyruvate + CO2. This is NADP-dependent malic enzyme (malA) from Dictyostelium discoideum (Social amoeba).